Consider the following 404-residue polypeptide: WD repeat and SOCS box-containing protein 2 (404 aa).

WD repeat units lie at residues 16–55 (GRPHQFDWKSSCETWSVAFSPDGSWFAWSQGHCIVKLIPW), 81–140 (GSPK…IWEV), 144–183 (LLLLNLSGHQDVVRDLSFTPSGSLILVSASRDKTLRIWDL), 188–226 (KQIQVLSGHLQWVYCCSISPDCSMLCSAAGEKSVFLWSM), 230–268 (TLIRKLEGHQSSVVSCDFSPDSALLVTASYDTNVIMWDP), 283–322 (DPAMDDSDVHISSLRSVCFSPEGLYLATVADDRLLRIWAL), and 325–362 (KTPIAFAPMTNGLCCTFFPHGGVIATGTRDGHVQFWTA). The segment at 68–87 (AKSRSSKNETKGRGSPKEKT) is disordered. An SOCS box domain is found at 356 to 404 (HVQFWTAPRVLSSLKHLCRKALRSFLTTYQVLALPIPKKMKEFLTYRTF).

The protein operates within protein modification; protein ubiquitination. Its function is as follows. May be a substrate-recognition component of a SCF-like ECS (Elongin-Cullin-SOCS-box protein) E3 ubiquitin ligase complex which mediates the ubiquitination and subsequent proteasomal degradation of target proteins. In Homo sapiens (Human), this protein is WD repeat and SOCS box-containing protein 2 (WSB2).